A 190-amino-acid chain; its full sequence is Apolipoprotein M (190 aa).

Positions 1–22 form a signal peptide, not cleaved; that stretch reads MFHQVWAALLSLYGLLFNSMNQ. 3 disulfides stabilise this stretch: cysteine 23–cysteine 169, cysteine 95–cysteine 185, and cysteine 130–cysteine 159. Residues glutamate 138 and arginine 145 each coordinate tetradecanoate.

It belongs to the calycin superfamily. Lipocalin family. Highly divergent. As to quaternary structure, interacts with LRP2; LRP2 mediates APOM renal uptake and subsequent lysosomal degradation. As to expression, expressed by the liver; secreted in plasma.

Its subcellular location is the secreted. Its function is as follows. Probably involved in lipid transport. Can bind sphingosine-1-phosphate, myristic acid, palmitic acid and stearic acid, retinol, all-trans-retinoic acid and 9-cis-retinoic acid. In Mus musculus (Mouse), this protein is Apolipoprotein M (Apom).